A 349-amino-acid polypeptide reads, in one-letter code: Phenylalanine--tRNA ligase alpha subunit (349 aa).

Glutamate 259 is a Mg(2+) binding site.

This sequence belongs to the class-II aminoacyl-tRNA synthetase family. Phe-tRNA synthetase alpha subunit type 1 subfamily. Tetramer of two alpha and two beta subunits. Requires Mg(2+) as cofactor.

The protein localises to the cytoplasm. It carries out the reaction tRNA(Phe) + L-phenylalanine + ATP = L-phenylalanyl-tRNA(Phe) + AMP + diphosphate + H(+). This Lactobacillus helveticus (strain DPC 4571) protein is Phenylalanine--tRNA ligase alpha subunit.